A 287-amino-acid polypeptide reads, in one-letter code: mRNA-capping enzyme regulatory subunit OPG124 (287 aa).

This sequence belongs to the orthopoxvirus mRNA-capping enzyme regulatory subunit family. In terms of assembly, interacts with the catalytic subunit OPG113.

It is found in the virion. Functionally, regulatory subunit of the mRNA cap enzyme which stabilizes the catalytic subunit and enhances its methyltransferase activity through an allosteric mechanism. Heterodimeric mRNA capping enzyme catalyzes the linkage of a N7-methyl-guanosine moiety to the first transcribed nucleotide (cap 0 structure), whereas the methyltransferase OPG102 is responsible for a second methylation at the 2'-O position of the ribose (cap 1 structure). Also involved in early viral gene transcription termination and intermediate viral gene transcription initiation. Early gene transcription termination requires the termination factor VTF, the DNA-dependent ATPase NPH-I/OPG123 and the RAP94/OPG109 subunit of the viral RNA polymerase, as well as the presence of a specific termination motif. Binds, together with RAP94/OPG109, to the termination motif 5'-UUUUUNU-3' in the nascent early mRNA. The sequence is that of mRNA-capping enzyme regulatory subunit OPG124 (OPG124) from Vaccinia virus (strain Copenhagen) (VACV).